A 1655-amino-acid polypeptide reads, in one-letter code: Outer membrane protein B (1655 aa).

The propeptide occupies 1335 to 1362 (GALRYLGTPETAEMAGPEAGAIPAAVAA). In terms of domain architecture, Autotransporter spans 1367–1655 (VDNVAYGIWA…QGTLKVRVNF (289 aa)).

The protein belongs to the rickettsiae OmpA/OmpB family.

Its subcellular location is the periplasm. It localises to the secreted. The protein resides in the cell surface. It is found in the cell outer membrane. The 120 kDa surface-exposed protein is a major structural protein which may play a role as a rickettsial virulence factor and/or immunogen during infection. Functionally, the 32 kDa beta peptide may serve as a membrane anchor. It has been shown to adhere to biotinylated Vero cell proteins. In Rickettsia conorii (strain ATCC VR-613 / Malish 7), this protein is Outer membrane protein B (ompB).